A 426-amino-acid polypeptide reads, in one-letter code: MLDPTLLRQQLAKLAECLLTVRGFTLDVAALEALESERKRIQVHTQELQSLRNSKSKAIGQARSKGEDVSALMAEVAAFSDDLKASEIALEEIRTELEKVALDIPNLPQQDVPLGADERENVEQARWGVPRTFDFAIKDHVELGACHGWLDAESAAKLSGARFTVLRGPIARLHRALAQCMLDLHVSQHGYEEVNVPIIVNADSLHGTGQLPKFEEDMFSTQLGEHRRYLISTSEISLTNLVRNEIIEADRLPLRMVAHSLCFRSEAGSGGRDTRGMIRQHQFEKVELVSVCKPQESEGEHHRMTRCAETVLEMLGLPYRKILLCTGDMGFAATKTYDLEVWLPSQGMYREISSCSNCGDFQARRMQARWRNSVTGKPELVHTLNGSGVAVGRAMIAVMENYQNADGSITVPEVLRPYMDGLSRIG.

233–235 contacts L-serine; the sequence is TSE. Residue 264 to 266 coordinates ATP; that stretch reads RSE. Glu287 lines the L-serine pocket. 351-354 contributes to the ATP binding site; sequence EISS. Ser387 contributes to the L-serine binding site.

It belongs to the class-II aminoacyl-tRNA synthetase family. Type-1 seryl-tRNA synthetase subfamily. In terms of assembly, homodimer. The tRNA molecule binds across the dimer.

The protein localises to the cytoplasm. The enzyme catalyses tRNA(Ser) + L-serine + ATP = L-seryl-tRNA(Ser) + AMP + diphosphate + H(+). It carries out the reaction tRNA(Sec) + L-serine + ATP = L-seryl-tRNA(Sec) + AMP + diphosphate + H(+). It functions in the pathway aminoacyl-tRNA biosynthesis; selenocysteinyl-tRNA(Sec) biosynthesis; L-seryl-tRNA(Sec) from L-serine and tRNA(Sec): step 1/1. In terms of biological role, catalyzes the attachment of serine to tRNA(Ser). Is also able to aminoacylate tRNA(Sec) with serine, to form the misacylated tRNA L-seryl-tRNA(Sec), which will be further converted into selenocysteinyl-tRNA(Sec). The protein is Serine--tRNA ligase of Xylella fastidiosa (strain M12).